The primary structure comprises 254 residues: Claudin-16 (254 aa).

Residues 1–22 (MGPGLAASHVSFPDSLLAKMRD) lie on the Cytoplasmic side of the membrane. A helical transmembrane segment spans residues 23–43 (LLQYVACFFAFFSAGFLVVAT). The Extracellular segment spans residues 44 to 98 (WTDCWMVNADDSLEVSTKCRGLWWECVTNAFDGIRTCDEYDSILAEHSLKLVVTR). The chain crosses the membrane as a helical span at residues 99 to 119 (ALMITADILAGFGFITLLLGL). At 120-134 (DCVKFLPDEPYIKVR) the chain is on the cytoplasmic side. A helical transmembrane segment spans residues 135-155 (ISFVAGTTLLIAGAPGIIGSV). The Extracellular segment spans residues 156 to 188 (WYAVDVYVERSSLVLHNIFLGIQYKFGWSCWLG). Residues 189-209 (MAGSLGCFLAGAILTCCLYLF) traverse the membrane as a helical segment. Topologically, residues 210 to 254 (KDVGPERSYPYSTRKAYSTTAVSMPRSHAIPRTQTAKMYAVDTRV) are cytoplasmic. The Interaction with TJP1 signature appears at 252 to 254 (TRV).

It belongs to the claudin family. Can form heteropolymeric tight junction strands with other claudins. Interacts with CLDN19. Interacts (via PDZ-binding motif TRV) with TJP1 (via PDZ domain). Cannot form tight junction strands on its own. Expressed preferentially in kidney.

The protein resides in the cell junction. Its subcellular location is the tight junction. It localises to the cell membrane. The catalysed reaction is Mg(2+)(in) = Mg(2+)(out). It carries out the reaction Ca(2+)(in) = Ca(2+)(out). It catalyses the reaction Na(+)(in) = Na(+)(out). The enzyme catalyses K(+)(in) = K(+)(out). The catalysed reaction is Rb(+)(in) = Rb(+)(out). It carries out the reaction Cs(+)(in) = Cs(+)(out). It catalyses the reaction Li(+)(in) = Li(+)(out). Its function is as follows. Forms paracellular channels: coassembles with CLDN19 into tight junction strands with cation-selective channels through the strands, conveying epithelial permeability in a process known as paracellular tight junction permeability. Involved in the maintenance of ion gradients along the nephron. In the thick ascending limb (TAL) of Henle's loop, facilitates sodium paracellular permeability from the interstitial compartment to the lumen, contributing to the lumen-positive transepithelial potential that drives paracellular magnesium and calcium reabsorption. The protein is Claudin-16 (CLDN16) of Bos taurus (Bovine).